The following is a 218-amino-acid chain: Glutathione S-transferase Mu 1 (218 aa).

The region spanning P2–G88 is the GST N-terminal domain. Residues Y7–W8, R43–W46, K50, and N59–L60 contribute to the glutathione site. S67 is modified (phosphoserine). Q72–S73 is a binding site for glutathione. A GST C-terminal domain is found at T90–I208. Position 116 (Y116) interacts with substrate. A phosphoserine mark is found at S205 and S210.

This sequence belongs to the GST superfamily. Mu family. Homodimer or heterodimer.

It is found in the cytoplasm. The catalysed reaction is RX + glutathione = an S-substituted glutathione + a halide anion + H(+). It catalyses the reaction prostaglandin A2 + glutathione = prostaglandin A2-S-(R)-glutathione. It carries out the reaction prostaglandin J2 + glutathione = prostaglandin J2-S-(R)-glutathione. The enzyme catalyses prostaglandin J2 + glutathione = prostaglandin J2-S-(S)-glutathione. The catalysed reaction is prostaglandin A2 + glutathione = prostaglandin A2-S-(S)-glutathione. It catalyses the reaction 11(S)-hydroxy-14(S),15(S)-epoxy-(5Z,8Z,12E)-eicosatrienoate + glutathione = (11S,15S)-dihydroxy-14(R)-S-glutathionyl-(5Z,8Z,12E)-eicosatrienoate. Its function is as follows. Conjugation of reduced glutathione to a wide number of exogenous and endogenous hydrophobic electrophiles. The olfactory GST may be crucial for the acuity of the olfactory process. Participates in the formation of novel hepoxilin regioisomers. In Rattus norvegicus (Rat), this protein is Glutathione S-transferase Mu 1.